A 243-amino-acid chain; its full sequence is Orotidine 5'-phosphate decarboxylase (243 aa).

Residues Asp-19, Lys-41, 69-78 (DLKFFDIPAT), Thr-124, Arg-185, Gln-194, Gly-214, and Arg-215 each bind substrate. Lys-71 (proton donor) is an active-site residue.

The protein belongs to the OMP decarboxylase family. Type 1 subfamily. In terms of assembly, homodimer.

The catalysed reaction is orotidine 5'-phosphate + H(+) = UMP + CO2. It participates in pyrimidine metabolism; UMP biosynthesis via de novo pathway; UMP from orotate: step 2/2. Functionally, catalyzes the decarboxylation of orotidine 5'-monophosphate (OMP) to uridine 5'-monophosphate (UMP). The chain is Orotidine 5'-phosphate decarboxylase from Xanthomonas campestris pv. campestris (strain B100).